Consider the following 424-residue polypeptide: CinA-like protein (424 aa).

It belongs to the CinA family.

This Shewanella woodyi (strain ATCC 51908 / MS32) protein is CinA-like protein.